The primary structure comprises 556 residues: Formate--tetrahydrofolate ligase (556 aa).

65–72 (TPAGEGKS) serves as a coordination point for ATP.

This sequence belongs to the formate--tetrahydrofolate ligase family.

The enzyme catalyses (6S)-5,6,7,8-tetrahydrofolate + formate + ATP = (6R)-10-formyltetrahydrofolate + ADP + phosphate. It functions in the pathway one-carbon metabolism; tetrahydrofolate interconversion. This chain is Formate--tetrahydrofolate ligase, found in Clostridium botulinum (strain Alaska E43 / Type E3).